Reading from the N-terminus, the 314-residue chain is Nodulation protein D 1 (314 aa).

The HTH lysR-type domain maps to 6–63 (LDLNLLVVLDALLTERTLTAAASSINLSQPAMSAAVARLRDYFNDELFTTSGRERVLT). The H-T-H motif DNA-binding region spans 23-42 (LTAAASSINLSQPAMSAAVA).

The protein belongs to the LysR transcriptional regulatory family.

Its function is as follows. NodD regulates the expression of the nodABCFE genes which encode other nodulation proteins. NodD is also a negative regulator of its own expression. Binds flavenoids as inducers. The chain is Nodulation protein D 1 (nodD1) from Mesorhizobium japonicum (strain LMG 29417 / CECT 9101 / MAFF 303099) (Mesorhizobium loti (strain MAFF 303099)).